We begin with the raw amino-acid sequence, 169 residues long: Thaumatin-like pathogenesis-related protein 2 (169 aa).

The N-terminal stretch at 1–21 (MATSSAVLFFLLAVFAAGASA) is a signal peptide.

This sequence belongs to the thaumatin family.

Functionally, associated with resistance against stem rust fungi. This Avena sativa (Oat) protein is Thaumatin-like pathogenesis-related protein 2 (RASTL-2).